A 249-amino-acid chain; its full sequence is uncharacterized protein (249 aa).

Histidine 10, histidine 12, glutamate 95, histidine 129, histidine 150, and aspartate 198 together coordinate a divalent metal cation.

This sequence belongs to the metallo-dependent hydrolases superfamily. TatD-type hydrolase family. The cofactor is a divalent metal cation.

This is an uncharacterized protein from Methanocaldococcus jannaschii (strain ATCC 43067 / DSM 2661 / JAL-1 / JCM 10045 / NBRC 100440) (Methanococcus jannaschii).